Consider the following 766-residue polypeptide: Tripartite terminase subunit 1 (766 aa).

Residues 191–219 (CSVCFEELCVTANQGEAVHRRLLECTCDH) form a C3H1-type zinc finger. Residue 683–690 (FSSVFHCG) coordinates ATP.

This sequence belongs to the herpesviridae TRM1 protein family. As to quaternary structure, associates with TRM2 and TRM3 to form the tripartite terminase complex. Interacts with portal protein.

The protein localises to the host nucleus. In terms of biological role, component of the molecular motor that translocates viral genomic DNA in empty capsid during DNA packaging. Forms a tripartite terminase complex together with TRM2 and TRM3 in the host cytoplasm. Once the complex reaches the host nucleus, it interacts with the capsid portal vertex. This portal forms a ring in which genomic DNA is translocated into the capsid. TRM1 carries an endonuclease activity that plays an important role for the cleavage of concatemeric viral DNA into unit length genomes. The protein is Tripartite terminase subunit 1 of Equus caballus (Horse).